The chain runs to 884 residues: MSELLFRLNFLLLLLLSCVSLASSFFSFNDPVVGLGACGPHQIQAFTQFKNEFDTHACNHSDSLNGVWCDNSTGAVMKLRLRACLSGTLKSNSSLFQFHQLRHLYLSYNNFTPSSIPSEFGMLNKLEVLFMSTGGFLGQVPSSFSNLSMLSALLLHHNELTGSLSFVRNLRKLTILDVSHNHFSGTLNPNSSLFELHNLAYLDLGSNNFTSSSLPYEFGNLNKLELLDVSSNSFFGQVPPTISNLTQLTELYLPLNDFTGSLPLVQNLTKLSILHLSDNHFSGTIPSSLFTMPFLSYLDLGGNNLSGSIEVPNSSLSSRLENLNLGENHFEGKIIEPISKLINLKELHLSFLNTSYPINLKLFSSLKYLLLLDLSGGWISQASLSLDSYIPSTLEALLLKHCNISVFPNILKTLPNLEFIALSTNKISGKIPEWLWSLPRLSSVFIEENLFTGFEGSSEILVNSSVRILNLLSNNLEGALPHLPLSVNYFSARNNRYGGDIPLSICSRRSLVFLDLSYNNFTGPIPPCPSNFLILNLRKNNLEGSIPDTYYADAPLRSLDVGYNRLTGKLPRSLLNCSALQFLSVDHNGIKDTFPFSLKALPKLQVLILHSNNFYGPLSPPNQGSLGFPELRILEIAGNKFTGSLPPDFFENWKASSLTMNEDQGLYMVYNKVVYGTYYFTSLEAIDLQYKGLSMEQNRVLSSSATIDFSGNRLEGEIPESIGLLKALIALNLSNNAFTGHIPLSLANLKKIESLDLSSNQLSGTIPNGIGTLSFLAYMNVSHNQLNGEIPQGTQITGQPKSSFEGNAGLCGLPLQESCFGTNAPPAQHPKEEEEEEEEEEQVLNWKGVGIGYGVGVLLGLAIAQLIASYKPEWLVFLFQSRNH.

Positions 1–24 (MSELLFRLNFLLLLLLSCVSLASS) are cleaved as a signal peptide. Residues 25 to 847 (FFSFNDPVVG…EEEEQVLNWK (823 aa)) lie on the Extracellular side of the membrane. N-linked (GlcNAc...) asparagine glycosylation is found at Asn59, Asn71, and Asn92. LRR repeat units follow at residues 98-122 (FHQL…EFGM), 124-146 (NKLE…SFSN), 147-170 (LSML…VRNL), 171-196 (RKLT…LFEL), 197-223 (HNLA…NLNK), 225-245 (ELLD…ISNL), 246-268 (TQLT…VQNL), 269-292 (TKLS…LFTM), 294-318 (FLSY…SLSS), and 320-344 (LENL…LINL). Asn146 carries an N-linked (GlcNAc...) asparagine glycan. N-linked (GlcNAc...) asparagine glycosylation is found at Asn190, Asn208, Asn244, and Asn267. N-linked (GlcNAc...) asparagine glycosylation is found at Asn304 and Asn313. The LRR 11; degenerate repeat unit spans residues 345–365 (KELHLSFLNTSYPINLKLFSS). Asn353 carries N-linked (GlcNAc...) asparagine glycosylation. LRR repeat units follow at residues 366-391 (LKYL…SYIP), 392-413 (STLE…ILKT), 414-438 (LPNL…LWSL), 440-463 (RLSS…ILVN), and 464-487 (SSVR…PLSV). Asn403 carries an N-linked (GlcNAc...) asparagine glycan. Asn463 carries N-linked (GlcNAc...) asparagine glycosylation. The stretch at 488-507 (NYFSARNNRYGGDIPLSICS) is one LRR 17; degenerate repeat. LRR repeat units follow at residues 508-529 (RRSL…PPCP), 530-553 (SNFL…YYAD), 554-577 (APLR…LLNC), 579-601 (ALQF…LKAL), 602-625 (PKLQ…NQGS), 628-652 (FPEL…FFEN), 702-725 (SSSA…IGLL), 726-749 (KALI…LANL), 750-773 (KKIE…IGTL), and 775-798 (FLAY…QITG). An N-linked (GlcNAc...) asparagine glycan is attached at Asn520. Asn576 is a glycosylation site (N-linked (GlcNAc...) asparagine). Asn732 is a glycosylation site (N-linked (GlcNAc...) asparagine). Asn780 carries an N-linked (GlcNAc...) asparagine glycan. Residues 848 to 868 (GVGIGYGVGVLLGLAIAQLIA) traverse the membrane as a helical segment. At 869–884 (SYKPEWLVFLFQSRNH) the chain is on the cytoplasmic side.

This sequence belongs to the RLP family.

Its subcellular location is the cell membrane. The sequence is that of Receptor-like protein 39 from Arabidopsis thaliana (Mouse-ear cress).